A 313-amino-acid polypeptide reads, in one-letter code: Iron-sulfur protein required for NADH dehydrogenase, mitochondrial (313 aa).

The transit peptide at 1-22 directs the protein to the mitochondrion; that stretch reads MATVALLRSLRRRELHAAHISA. 51-58 contacts ATP; the sequence is GKGGVGKS.

It belongs to the Mrp/NBP35 ATP-binding proteins family. [4Fe-4S] cluster serves as cofactor.

The protein resides in the mitochondrion matrix. Essential during early vegetative growth. Required for the assembly of the mitochondrial membrane respiratory chain NADH dehydrogenase (Complex I). Involved in mitochondrial translation activity. May deliver of one or more Fe-S clusters to complex I subunits. This Arabidopsis thaliana (Mouse-ear cress) protein is Iron-sulfur protein required for NADH dehydrogenase, mitochondrial.